A 330-amino-acid polypeptide reads, in one-letter code: Autoinducer 2 import system permease protein LsrD (330 aa).

The Cytoplasmic portion of the chain corresponds to 1–4; it reads MRIR. A helical membrane pass occupies residues 5–25; that stretch reads YGWELALAALLVIEIVAFGAI. Over 26–42 the chain is Periplasmic; that stretch reads NPRMLDLNMLLFSTSDF. A helical membrane pass occupies residues 43 to 63; that stretch reads ICIGIVALPLTMVIVSGGIDI. Residues 64-67 lie on the Cytoplasmic side of the membrane; it reads SFGS. The next 2 membrane-spanning stretches (helical) occupy residues 68–88 and 89–109; these read TIGL…PMPL and AILL…GLII. Topologically, residues 110 to 115 are cytoplasmic; it reads YTKVNP. Residues 116–136 traverse the membrane as a helical segment; that stretch reads LVITLGTLYLFAGSALLLSGM. The Periplasmic portion of the chain corresponds to 137-159; it reads AGATGYEGIGGFPMAFTDFANLD. Residues 160–180 form a helical membrane-spanning segment; it reads VLGLPVPLIIFLICLLVFWLW. Residues 181 to 209 are Cytoplasmic-facing; it reads LHKTHAGRNVFLIGQSPRVALYSAIPVNR. Residues 210–230 traverse the membrane as a helical segment; sequence TLCALYAMTGLASAVAAVLLV. Residues 231–237 lie on the Periplasmic side of the membrane; it reads SYFGSAR. Transmembrane regions (helical) follow at residues 238–258 and 259–279; these read SDLG…GGAN and IYGG…VGYL. Over 280-285 the chain is Periplasmic; sequence QQGLQM. The chain crosses the membrane as a helical span at residues 286–306; it reads AGVPNQVSSALSGALLIVVVV. The Cytoplasmic segment spans residues 307-330; the sequence is GRSVSLHRQQIKEWLARRANNPLP.

It belongs to the binding-protein-dependent transport system permease family. AraH/RbsC subfamily. The complex is composed of two ATP-binding proteins (LsrA), two transmembrane proteins (LsrC and LsrD) and a solute-binding protein (LsrB).

Its subcellular location is the cell inner membrane. Functionally, part of the ABC transporter complex LsrABCD involved in autoinducer 2 (AI-2) import. Probably responsible for the translocation of the substrate across the membrane. This is Autoinducer 2 import system permease protein LsrD (lsrD) from Shigella flexneri serotype 5b (strain 8401).